The primary structure comprises 351 residues: tRNA-specific 2-thiouridylase MnmA 2 (351 aa).

ATP is bound by residues 13 to 20 (GMSGGTDS) and F39. C98 serves as the catalytic Nucleophile. Cysteines 98 and 195 form a disulfide. Residue G122 participates in ATP binding. Residues 144 to 146 (KDQ) form an interaction with tRNA region. C195 serves as the catalytic Cysteine persulfide intermediate. Residues 301-302 (RY) are interaction with tRNA.

It belongs to the MnmA/TRMU family.

It localises to the cytoplasm. It carries out the reaction S-sulfanyl-L-cysteinyl-[protein] + uridine(34) in tRNA + AH2 + ATP = 2-thiouridine(34) in tRNA + L-cysteinyl-[protein] + A + AMP + diphosphate + H(+). Functionally, catalyzes the 2-thiolation of uridine at the wobble position (U34) of tRNA, leading to the formation of s(2)U34. The polypeptide is tRNA-specific 2-thiouridylase MnmA 2 (Phocaeicola vulgatus (strain ATCC 8482 / DSM 1447 / JCM 5826 / CCUG 4940 / NBRC 14291 / NCTC 11154) (Bacteroides vulgatus)).